The sequence spans 240 residues: Cell division control protein 14 (240 aa).

In terms of assembly, interacts with sid1.

It is found in the cytoplasm. The protein localises to the cytoskeleton. The protein resides in the microtubule organizing center. It localises to the spindle pole body. In terms of biological role, has a role in the septation initiation network (SIN) required for cytokinesis. The sequence is that of Cell division control protein 14 (cdc14) from Schizosaccharomyces pombe (strain 972 / ATCC 24843) (Fission yeast).